Reading from the N-terminus, the 436-residue chain is Trigger factor (436 aa).

Residues 161 to 255 form the PPIase FKBP-type domain; the sequence is DDVAIIDFKT…VKEVREKQLP (95 aa).

This sequence belongs to the FKBP-type PPIase family. Tig subfamily.

The protein localises to the cytoplasm. The catalysed reaction is [protein]-peptidylproline (omega=180) = [protein]-peptidylproline (omega=0). Its function is as follows. Involved in protein export. Acts as a chaperone by maintaining the newly synthesized protein in an open conformation. Functions as a peptidyl-prolyl cis-trans isomerase. This chain is Trigger factor, found in Akkermansia muciniphila (strain ATCC BAA-835 / DSM 22959 / JCM 33894 / BCRC 81048 / CCUG 64013 / CIP 107961 / Muc).